A 567-amino-acid polypeptide reads, in one-letter code: Low-affinity glucose transporter (567 aa).

Residues 1-24 (MSNQMTDSTSAGSGTEHSVDTNTA) are compositionally biased toward polar residues. The tract at residues 1 to 36 (MSNQMTDSTSAGSGTEHSVDTNTALKAGSPNDLKVS) is disordered. The Cytoplasmic segment spans residues 18–62 (SVDTNTALKAGSPNDLKVSHEEDLNDLEKTAEETLQQKPAKEYIF). A helical transmembrane segment spans residues 63–83 (VSLCCVMVAFGGFVFGWDTGT). The Extracellular segment spans residues 84–113 (ISGFVNQTDFLRRFGQEKADGSHYLSNVRT). Asparagine 89 carries N-linked (GlcNAc...) asparagine glycosylation. The chain crosses the membrane as a helical span at residues 114–134 (GLIVSIFNIGCAVGGIVLSNI). The Cytoplasmic portion of the chain corresponds to 135–141 (GDRWGRR). Residues 142-162 (IGLITVIIIYVIGIIIQIASV) traverse the membrane as a helical segment. Residues 163 to 167 (DKWYQ) are Extracellular-facing. The chain crosses the membrane as a helical span at residues 168 to 188 (YFIGRIISGLGVGGITVLSPM). The Cytoplasmic portion of the chain corresponds to 189 to 199 (LISETAPKHLR). A helical transmembrane segment spans residues 200–220 (GTLVSCYQLMITFGIFLGYCT). The Extracellular segment spans residues 221–234 (NYGTKNYSNSVQWR). The helical transmembrane segment at 235–255 (VPLGLCFAWAIFMVLGMMFVP) threads the bilayer. At 256–334 (ESARFLVETD…MGIMIQSLQQ (79 aa)) the chain is on the cytoplasmic side. The chain crosses the membrane as a helical span at residues 335-354 (LTGDNYFFYYGTTIFQSVGM). The Extracellular segment spans residues 355–358 (DDSF). Residues 359–379 (ETSIVLGIVNFASTFFALYTV) traverse the membrane as a helical segment. Over 380–386 (DHFGRRN) the chain is Cytoplasmic. Residues 387–407 (CLLYGCVGMVACYVVYASVGV) traverse the membrane as a helical segment. Residues 408-429 (TRLWPDGPDHPDISSKGAGNCM) are Extracellular-facing. Residues 430–450 (IVFACFYIFCFATTWAPIAYV) traverse the membrane as a helical segment. Topologically, residues 451–466 (VISESYPLRVKGKAMA) are cytoplasmic. Residues 467 to 487 (IASASNWIWGFLIGFFTPFIT) form a helical membrane-spanning segment. Residues 488 to 493 (SAIHFY) lie on the Extracellular side of the membrane. A helical membrane pass occupies residues 494 to 514 (YGYVFMGCMVFAFFYVYFFVP). Topologically, residues 515 to 567 (ETKGLTLEEVNEMYSEGVLPWKSSSWVPSSRRGAEYDVDALQHDDKPWYKAML) are cytoplasmic.

This sequence belongs to the major facilitator superfamily. Sugar transporter (TC 2.A.1.1) family.

Its subcellular location is the membrane. Functionally, low-affinity glucose transporter. This Kluyveromyces lactis (strain ATCC 8585 / CBS 2359 / DSM 70799 / NBRC 1267 / NRRL Y-1140 / WM37) (Yeast) protein is Low-affinity glucose transporter (RAG1).